The primary structure comprises 55 residues: Beta-toxin Cn7 (55 aa).

An LCN-type CS-alpha/beta domain is found at 1 to 55 (KEGYIVNYHDGCKYECYKLGDNDYCLRECKLRVGKGAGGYCYAFACWCTHLYEQA). 3 cysteine pairs are disulfide-bonded: Cys-16–Cys-41, Cys-25–Cys-46, and Cys-29–Cys-48.

It belongs to the long (3 C-C) scorpion toxin superfamily. Sodium channel inhibitor family. Beta subfamily. Expressed by the venom gland.

It localises to the secreted. In terms of biological role, beta toxins bind voltage-independently at site-4 of sodium channels (Nav) and shift the voltage of activation toward more negative potentials thereby affecting sodium channel activation and promoting spontaneous and repetitive firing. This chain is Beta-toxin Cn7, found in Centruroides noxius (Mexican scorpion).